The following is a 218-amino-acid chain: Uracil-DNA glycosylase (218 aa).

The Proton acceptor role is filled by D60.

The protein belongs to the uracil-DNA glycosylase (UDG) superfamily. UNG family.

The protein resides in the cytoplasm. The enzyme catalyses Hydrolyzes single-stranded DNA or mismatched double-stranded DNA and polynucleotides, releasing free uracil.. In terms of biological role, excises uracil residues from the DNA which can arise as a result of misincorporation of dUMP residues by DNA polymerase or due to deamination of cytosine. This chain is Uracil-DNA glycosylase, found in Francisella philomiragia subsp. philomiragia (strain ATCC 25017 / CCUG 19701 / FSC 153 / O#319-036).